Consider the following 107-residue polypeptide: Integration host factor subunit beta (107 aa).

A compositionally biased stretch (basic and acidic residues) spans 82–101; it reads PGKELRERVDRRAGEPLKAE. Residues 82–107 form a disordered region; that stretch reads PGKELRERVDRRAGEPLKAEDPDDDL.

This sequence belongs to the bacterial histone-like protein family. In terms of assembly, heterodimer of an alpha and a beta chain.

Its function is as follows. This protein is one of the two subunits of integration host factor, a specific DNA-binding protein that functions in genetic recombination as well as in transcriptional and translational control. This is Integration host factor subunit beta from Paraburkholderia xenovorans (strain LB400).